Here is a 742-residue protein sequence, read N- to C-terminus: Photosystem I P700 chlorophyll a apoprotein A2 (742 aa).

A run of 8 helical transmembrane segments spans residues 46–69, 135–158, 175–199, 273–291, 336–359, 375–401, 423–445, and 525–543; these read LFSTHFGHLAIIALWVAGNLFHIA, LFQASIFMSILACWTLFAGWLHLQ, LNHHLAVLFGFSSIAWTGHLVHVAI, IAHHHIAIGTVFVIAGHMY, LHFQLGLALASLGVATSLVAQHMG, SALYSHHQYIAMFLMVGAFAHGAIFFV, ALISHLSWVTMLLGFHTLGIYVH, and FLVHHAIALGLHTTALILI. Residues Cys-567 and Cys-576 each contribute to the [4Fe-4S] cluster site. Transmembrane regions (helical) follow at residues 583–604 and 651–673; these read AMYLAMFWALNLLAWVTFYWHW and LSPWAWMFLFGHLVWATGFMFLI. Divinyl chlorophyll a contacts are provided by His-662, Met-670, and Tyr-678. Trp-679 provides a ligand contact to phylloquinone. Residues 715–735 form a helical membrane-spanning segment; that stretch reads LVGLAHFTIGNILTFGAFVIA.

Belongs to the PsaA/PsaB family. The PsaA/B heterodimer binds the P700 divinyl chlorophyll special pair and subsequent electron acceptors. PSI consists of a core antenna complex that captures photons, and an electron transfer chain that converts photonic excitation into a charge separation. The cyanobacterial PSI reaction center is composed of one copy each of PsaA,B,C,D,E,F,I,J,K,L,M and X, and forms trimeric complexes. PSI electron transfer chain: 5 divinyl chlorophyll a, 1 divinyl chlorophyll a', 2 phylloquinones and 3 4Fe-4S clusters. PSI core antenna: 90 divinyl chlorophyll a, 22 carotenoids, 3 phospholipids and 1 galactolipid. P700 is a divinyl chlorophyll a/divinyl chlorophyll a' dimer, A0 is one or more divinyl chlorophyll a, A1 is one or both phylloquinones and FX is a shared 4Fe-4S iron-sulfur center. is required as a cofactor.

The protein resides in the cellular thylakoid membrane. It catalyses the reaction reduced [plastocyanin] + hnu + oxidized [2Fe-2S]-[ferredoxin] = oxidized [plastocyanin] + reduced [2Fe-2S]-[ferredoxin]. PsaA and PsaB bind P700, the primary electron donor of photosystem I (PSI), as well as the electron acceptors A0, A1 and FX. PSI is a plastocyanin/cytochrome c6-ferredoxin oxidoreductase, converting photonic excitation into a charge separation, which transfers an electron from the donor P700 chlorophyll pair to the spectroscopically characterized acceptors A0, A1, FX, FA and FB in turn. Oxidized P700 is reduced on the lumenal side of the thylakoid membrane by plastocyanin or cytochrome c6. The sequence is that of Photosystem I P700 chlorophyll a apoprotein A2 from Prochlorococcus marinus (strain MIT 9301).